The primary structure comprises 150 residues: Ribonuclease K6 (150 aa).

The N-terminal stretch at Met1–Ala23 is a signal peptide. Residue His38 is the Proton acceptor of the active site. 4 disulfides stabilise this stretch: Cys46-Cys104, Cys60-Cys114, Cys78-Cys129, and Cys85-Cys92. A glycan (N-linked (GlcNAc...) asparagine) is linked at Asn55. Substrate contacts are provided by residues Lys61–Thr65 and Lys86. Residue Asn100 is glycosylated (N-linked (GlcNAc...) asparagine). Position 105 (Arg105) interacts with substrate. Catalysis depends on His145, which acts as the Proton donor.

This sequence belongs to the pancreatic ribonuclease family. In terms of assembly, interacts (via N-terminus) with bacterial lipopolysaccharide (LPS).

The protein resides in the secreted. Its subcellular location is the lysosome. The protein localises to the cytoplasmic granule. Its function is as follows. Ribonuclease which shows a preference for the pyrimidines uridine and cytosine. Has potent antibacterial activity against a range of Gram-positive and Gram-negative bacteria, including P.aeruginosa, A.baumanii, M.luteus, S.aureus, E.faecalis, E.faecium, S.saprophyticus and E.coli. Causes loss of bacterial membrane integrity, and also promotes agglutination of Gram-negative bacteria. Probably contributes to urinary tract sterility. Bactericidal activity is independent of RNase activity. The protein is Ribonuclease K6 (RNASE6) of Macaca mulatta (Rhesus macaque).